The sequence spans 740 residues: Vertnin (740 aa).

Disordered regions lie at residues 485–506, 560–616, and 653–673; these read EAGE…RGLI, PGMQ…DQNV, and TQSQ…APGG. Over residues 578-604 the composition is skewed to basic and acidic residues; that stretch reads QKPEGRQKPEEQQKPEGRQKPEGRQKP. Residues 653–667 show a composition bias toward polar residues; the sequence is TQSQPHSGSLPSQTL.

Belongs to the vertnin family.

It is found in the nucleus. In terms of biological role, acts as a transcription factor that regulates development of thoracic vertebrae. The polypeptide is Vertnin (Vrtn) (Mus musculus (Mouse)).